Reading from the N-terminus, the 246-residue chain is Glandular kallikrein (246 aa).

Residues 1 to 7 constitute a propeptide that is removed on maturation; that stretch reads APPIQSR. Residues 8–243 form the Peptidase S1 domain; sequence IIGGRECEKN…YLDWINDTIT (236 aa). Intrachain disulfides connect Cys-14-Cys-158, Cys-33-Cys-49, Cys-135-Cys-204, Cys-169-Cys-183, and Cys-194-Cys-219. His-48 functions as the Charge relay system in the catalytic mechanism. Asn-85 carries N-linked (GlcNAc...) asparagine glycosylation. The segment at 85–104 is kallikrein (autolysis) loop; that stretch reads NLSLLKXHTKADGKDYSHDL. Asp-103 serves as the catalytic Charge relay system. The active-site Charge relay system is the Ser-198. Asn-239 is a glycosylation site (N-linked (GlcNAc...) asparagine).

Belongs to the peptidase S1 family. Kallikrein subfamily. In terms of assembly, monomer.

The catalysed reaction is Preferential cleavage of Arg-|-Xaa bonds in small molecule substrates. Highly selective action to release kallidin (lysyl-bradykinin) from kininogen involves hydrolysis of Met-|-Xaa or Leu-|-Xaa.. Functionally, glandular kallikreins cleave Met-Lys and Arg-Ser bonds in kininogen to release Lys-bradykinin. This is Glandular kallikrein from Sus scrofa (Pig).